A 304-amino-acid chain; its full sequence is Acetyl-coenzyme A carboxylase carboxyl transferase subunit beta (304 aa).

Residues 25–294 (VWTKCDSCGQ…PSVVESKADT (270 aa)) form the CoA carboxyltransferase N-terminal domain. 4 residues coordinate Zn(2+): Cys29, Cys32, Cys48, and Cys51. The C4-type zinc-finger motif lies at 29 to 51 (CDSCGQVLYRAELERNLEVCPKC).

This sequence belongs to the AccD/PCCB family. As to quaternary structure, acetyl-CoA carboxylase is a heterohexamer composed of biotin carboxyl carrier protein (AccB), biotin carboxylase (AccC) and two subunits each of ACCase subunit alpha (AccA) and ACCase subunit beta (AccD). The cofactor is Zn(2+).

The protein resides in the cytoplasm. It carries out the reaction N(6)-carboxybiotinyl-L-lysyl-[protein] + acetyl-CoA = N(6)-biotinyl-L-lysyl-[protein] + malonyl-CoA. It participates in lipid metabolism; malonyl-CoA biosynthesis; malonyl-CoA from acetyl-CoA: step 1/1. Component of the acetyl coenzyme A carboxylase (ACC) complex. Biotin carboxylase (BC) catalyzes the carboxylation of biotin on its carrier protein (BCCP) and then the CO(2) group is transferred by the transcarboxylase to acetyl-CoA to form malonyl-CoA. The sequence is that of Acetyl-coenzyme A carboxylase carboxyl transferase subunit beta from Yersinia pestis bv. Antiqua (strain Nepal516).